We begin with the raw amino-acid sequence, 747 residues long: MADEAALALQPGGSPSAAGADREAASSPAGEPLRKRPRRDGPGLERSPGEPGGAAPEREVPAAARGCPGAAAAALWREAEAEAAAAGGEQEAQATAAAGEGDNGPGLQGPSREPPLADNLYDEDDDDEGEEEEEAAAAAIGYRDNLLFGDEIITNGFHSCESDEEDRASHASSSDWTPRPRIGPYTFVQQHLMIGTDPRTILKDLLPETIPPPELDDMTLWQIVINILSEPPKRKKRKDINTIEDAVKLLQECKKIIVLTGAGVSVSCGIPDFRSRDGIYARLAVDFPDLPDPQAMFDIEYFRKDPRPFFKFAKEIYPGQFQPSLCHKFIALSDKEGKLLRNYTQNIDTLEQVAGIQRIIQCHGSFATASCLICKYKVDCEAVRGDIFNQVVPRCPRCPADEPLAIMKPEIVFFGENLPEQFHRAMKYDKDEVDLLIVIGSSLKVRPVALIPSSIPHEVPQILINREPLPHLHFDVELLGDCDVIINELCHRLGGEYAKLCCNPVKLSEITEKPPRTQKELAYLSELPPTPLHVSEDSSSPERTSPPDSSVIVTLLDQAAKSNDDLDVSESKGCMEEKPQEVQTSRNVESIAEQMENPDLKNVGSSTGEKNERTSVAGTVRKCWPNRVAKEQISRRLDGNQYLFLPPNRYIFHGAEVYSDSEDDVLSSSSCGSNSDSGTCQSPSLEEPMEDESEIEEFYNGLEDEPDVPERAGGAGFGTDGDDQEAINEAISVKQEVTDMNYPSNKS.

A disordered region spans residues 1-135 (MADEAALALQ…DDEGEEEEEA (135 aa)). An N-acetylalanine modification is found at Ala-2. An interaction with CLOCK region spans residues 2–139 (ADEAALALQP…EEEEEAAAAA (138 aa)). The tract at residues 2–268 (ADEAALALQP…LTGAGVSVSC (267 aa)) is interaction with H1-4. 2 positions are modified to phosphoserine: Ser-14 and Ser-26. Ser-27 is subject to Phosphoserine; by MAPK8. The short motif at 32 to 39 (PLRKRPRR) is the Nuclear localization signal element. Ser-47 is subject to Phosphoserine; by MAPK8. The segment covering 61 to 100 (PAAARGCPGAAAAALWREAEAEAAAAGGEQEAQATAAAGE) has biased composition (low complexity). The segment covering 120–135 (LYDEDDDDEGEEEEEA) has biased composition (acidic residues). A Nuclear export signal motif is present at residues 138–145 (AAIGYRDN). Residues 143-541 (RDNLLFGDEI…LHVSEDSSSP (399 aa)) are interaction with CCAR2. Phosphoserine is present on residues Ser-159, Ser-162, Ser-172, and Ser-173. The short motif at 223–230 (IVINILSE) is the Nuclear localization signal element. The region spanning 236 to 496 (KRKDINTIED…NELCHRLGGE (261 aa)) is the Deacetylase sirtuin-type domain. N6-acetyllysine is present on Lys-238. The segment at 256–259 (IIVL) is required for interaction with the sumoylated form of CCAR2. NAD(+)-binding positions include 261–280 (GAGV…DGIY) and 345–348 (QNID). The Proton acceptor role is filled by His-363. Residues Cys-371 and Cys-374 each contribute to the Zn(2+) site. An N6-acetyllysine modification is found at Lys-377. The Zn(2+) site is built by Cys-395 and Cys-398. 2 positions are modified to S-nitrosocysteine: Cys-395 and Cys-398. Residues 425-431 (AMKYDKD) carry the Nuclear export signal motif. At Lys-430 the chain carries N6-acetyllysine. Residues 440-442 (GSS), 465-467 (NRE), and Cys-482 contribute to the NAD(+) site. Residue Lys-513 is modified to N6-acetyllysine. Disordered stretches follow at residues 523 to 549 (YLSE…PPDS) and 562 to 587 (SNDD…TSRN). Phosphothreonine; by DYRK1A, DYRK3 and MAPK8 is present on Thr-530. Ser-535 is subject to Phosphoserine. A compositionally biased stretch (polar residues) spans 537–549 (DSSSPERTSPPDS). A phosphorylated at one of three serine residues region spans residues 538–540 (SSS). At Thr-544 the chain carries Phosphothreonine. The residue at position 545 (Ser-545) is a Phosphoserine. Positions 569–580 (SESKGCMEEKPQ) are enriched in basic and acidic residues. Residue Lys-610 is modified to N6-acetyllysine. Phosphoserine; by CaMK2 is present on residues Ser-659 and Ser-661. Positions 663 to 726 (DDVLSSSSCG…FGTDGDDQEA (64 aa)) are disordered. The segment covering 666 to 677 (LSSSSCGSNSDS) has biased composition (low complexity). Over residues 687–707 (EPMEDESEIEEFYNGLEDEPD) the composition is skewed to acidic residues. Residue Thr-719 is modified to Phosphothreonine. Ser-747 is subject to Phosphoserine.

The protein belongs to the sirtuin family. Class I subfamily. In terms of assembly, interacts with XBP1 isoform 2. Found in a complex with PCAF and MYOD1. Interacts with FOXO1; the interaction deacetylates FOXO1, resulting in its nuclear retention and promotion of its transcriptional activity Component of the eNoSC complex, composed of SIRT1, SUV39H1 and RRP8. Interacts with HES1, HEY2 and PML. Interacts with RPS19BP1/AROS. Interacts with CCAR2 (via N-terminus); the interaction disrupts the interaction between SIRT1 and p53/TP53. Interacts with SETD7; the interaction induces the dissociation of SIRT1 from p53/TP53 and increases p53/TP53 activity. Interacts with MYCN, NR1I2, CREBZF, TSC2, TLE1, FOS, JUN, NR0B2, PPARG, NCOR, IRS1, IRS2 and NMNAT1. Interacts with HNF1A; the interaction occurs under nutrient restriction. Interacts with SUZ12; the interaction mediates the association with the PRC4 histone methylation complex which is specific as an association with PCR2 and PCR3 complex variants is not found. Interacts with BCL6; leads to a epigenetic repression of specific target genes. Interacts with CLOCK, BMAL1 and PER2. Interacts with PPARA; the interaction seems to be modulated by NAD(+) levels. Interacts with NR1H3 and this interaction is inhibited in the presence of CCAR2. Interacts with CHEK2. Interacts with p53/TP53. Exhibits a preferential interaction with sumoylated CCAR2 over its unmodified form. Interacts with PACS2. Interacts with SIRT7. Interacts with PUS7. Interacts with TULP3. Interacts with MORN3; the interaction enhances the ubiquitination of p53/TP53. (Microbial infection) Interacts with HIV-1 Tat. It depends on Zn(2+) as a cofactor. In terms of processing, methylated on multiple lysine residues; methylation is enhanced after DNA damage and is dispensable for deacetylase activity toward p53/TP53. Phosphorylated. Phosphorylated by STK4/MST1, resulting in inhibition of SIRT1-mediated p53/TP53 deacetylation. Phosphorylation by MAPK8/JNK1 at Ser-27, Ser-47, and Thr-530 leads to increased nuclear localization and enzymatic activity. Phosphorylation at Thr-530 by DYRK1A and DYRK3 activates deacetylase activity and promotes cell survival. Phosphorylation by mammalian target of rapamycin complex 1 (mTORC1) at Ser-47 inhibits deacetylation activity. Phosphorylated by CaMK2, leading to increased p53/TP53 and NF-kappa-B p65/RELA deacetylation activity. Phosphorylation at Ser-27 implicating MAPK9 is linked to protein stability. There is some ambiguity for some phosphosites: Ser-159/Ser-162 and Thr-544/Ser-545. Post-translationally, proteolytically cleaved by cathepsin B upon TNF-alpha treatment to yield catalytic inactive but stable SirtT1 75 kDa fragment (75SirT1). In terms of processing, S-nitrosylated by GAPDH, leading to inhibit the NAD-dependent protein deacetylase activity. Acetylated at various Lys residues. Deacetylated via an autocatalytic mechanism. Autodeacetylation at Lys-238 promotes its protein deacetylase activity. Post-translationally, ubiquitinated; leading to degradation. Deubiquitinated by USP22; leading to stabilization. Widely expressed.

It is found in the nucleus. It localises to the PML body. The protein localises to the cytoplasm. The protein resides in the mitochondrion. The catalysed reaction is N(6)-acetyl-L-lysyl-[protein] + NAD(+) + H2O = 2''-O-acetyl-ADP-D-ribose + nicotinamide + L-lysyl-[protein]. It carries out the reaction N(6)-propanoyl-L-lysyl-[protein] + NAD(+) + H2O = 3''-O-propanoyl-ADP-D-ribose + nicotinamide + L-lysyl-[protein]. It catalyses the reaction N(6)-(2E)-butenoyl-L-lysyl-[protein] + NAD(+) + H2O = 2''-O-(2E)-but-2-enoyl-ADP-D-ribose + nicotinamide + L-lysyl-[protein]. The enzyme catalyses N(6)-[(S)-lactoyl]-L-lysyl-[protein] + NAD(+) + H2O = 2''-O-(S)-lactoyl-ADP-D-ribose + nicotinamide + L-lysyl-[protein]. Its activity is regulated as follows. Inhibited by nicotinamide. Activated by resveratrol (3,5,4'-trihydroxy-trans-stilbene), butein (3,4,2',4'-tetrahydroxychalcone), piceatannol (3,5,3',4'-tetrahydroxy-trans-stilbene), Isoliquiritigenin (4,2',4'-trihydroxychalcone), fisetin (3,7,3',4'-tetrahydroxyflavone) and quercetin (3,5,7,3',4'-pentahydroxyflavone). MAPK8/JNK1 and RPS19BP1/AROS act as positive regulators of deacetylation activity. Negatively regulated by CCAR2. Functionally, NAD-dependent protein deacetylase that links transcriptional regulation directly to intracellular energetics and participates in the coordination of several separated cellular functions such as cell cycle, response to DNA damage, metabolism, apoptosis and autophagy. Can modulate chromatin function through deacetylation of histones and can promote alterations in the methylation of histones and DNA, leading to transcriptional repression. Deacetylates a broad range of transcription factors and coregulators, thereby regulating target gene expression positively and negatively. Serves as a sensor of the cytosolic ratio of NAD(+)/NADH which is altered by glucose deprivation and metabolic changes associated with caloric restriction. Is essential in skeletal muscle cell differentiation and in response to low nutrients mediates the inhibitory effect on skeletal myoblast differentiation which also involves 5'-AMP-activated protein kinase (AMPK) and nicotinamide phosphoribosyltransferase (NAMPT). Component of the eNoSC (energy-dependent nucleolar silencing) complex, a complex that mediates silencing of rDNA in response to intracellular energy status and acts by recruiting histone-modifying enzymes. The eNoSC complex is able to sense the energy status of cell: upon glucose starvation, elevation of NAD(+)/NADP(+) ratio activates SIRT1, leading to histone H3 deacetylation followed by dimethylation of H3 at 'Lys-9' (H3K9me2) by SUV39H1 and the formation of silent chromatin in the rDNA locus. Deacetylates 'Lys-266' of SUV39H1, leading to its activation. Inhibits skeletal muscle differentiation by deacetylating PCAF and MYOD1. Deacetylates H2A and 'Lys-26' of H1-4. Deacetylates 'Lys-16' of histone H4 (in vitro). Involved in NR0B2/SHP corepression function through chromatin remodeling: Recruited to LRH1 target gene promoters by NR0B2/SHP thereby stimulating histone H3 and H4 deacetylation leading to transcriptional repression. Proposed to contribute to genomic integrity via positive regulation of telomere length; however, reports on localization to pericentromeric heterochromatin are conflicting. Proposed to play a role in constitutive heterochromatin (CH) formation and/or maintenance through regulation of the available pool of nuclear SUV39H1. Upon oxidative/metabolic stress decreases SUV39H1 degradation by inhibiting SUV39H1 polyubiquitination by MDM2. This increase in SUV39H1 levels enhances SUV39H1 turnover in CH, which in turn seems to accelerate renewal of the heterochromatin which correlates with greater genomic integrity during stress response. Deacetylates 'Lys-382' of p53/TP53 and impairs its ability to induce transcription-dependent proapoptotic program and modulate cell senescence. Deacetylates TAF1B and thereby represses rDNA transcription by the RNA polymerase I. Deacetylates MYC, promotes the association of MYC with MAX and decreases MYC stability leading to compromised transformational capability. Deacetylates FOXO3 in response to oxidative stress thereby increasing its ability to induce cell cycle arrest and resistance to oxidative stress but inhibiting FOXO3-mediated induction of apoptosis transcriptional activity; also leading to FOXO3 ubiquitination and protesomal degradation. Appears to have a similar effect on MLLT7/FOXO4 in regulation of transcriptional activity and apoptosis. Deacetylates DNMT1; thereby impairs DNMT1 methyltransferase-independent transcription repressor activity, modulates DNMT1 cell cycle regulatory function and DNMT1-mediated gene silencing. Deacetylates RELA/NF-kappa-B p65 thereby inhibiting its transactivating potential and augments apoptosis in response to TNF-alpha. Deacetylates HIF1A, KAT5/TIP60, RB1 and HIC1. Deacetylates FOXO1 resulting in its nuclear retention and enhancement of its transcriptional activity leading to increased gluconeogenesis in liver. Inhibits E2F1 transcriptional activity and apoptotic function, possibly by deacetylation. Involved in HES1- and HEY2-mediated transcriptional repression. In cooperation with MYCN seems to be involved in transcriptional repression of DUSP6/MAPK3 leading to MYCN stabilization by phosphorylation at 'Ser-62'. Deacetylates MEF2D. Required for antagonist-mediated transcription suppression of AR-dependent genes which may be linked to local deacetylation of histone H3. Represses HNF1A-mediated transcription. Required for the repression of ESRRG by CREBZF. Deacetylates NR1H3 and NR1H2 and deacetylation of NR1H3 at 'Lys-434' positively regulates transcription of NR1H3:RXR target genes, promotes NR1H3 proteasomal degradation and results in cholesterol efflux; a promoter clearing mechanism after reach round of transcription is proposed. Involved in lipid metabolism: deacetylates LPIN1, thereby inhibiting diacylglycerol synthesis. Implicated in regulation of adipogenesis and fat mobilization in white adipocytes by repression of PPARG which probably involves association with NCOR1 and SMRT/NCOR2. Deacetylates p300/EP300 and PRMT1. Deacetylates ACSS2 leading to its activation, and HMGCS1 deacetylation. Involved in liver and muscle metabolism. Through deacetylation and activation of PPARGC1A is required to activate fatty acid oxidation in skeletal muscle under low-glucose conditions and is involved in glucose homeostasis. Involved in regulation of PPARA and fatty acid beta-oxidation in liver. Involved in positive regulation of insulin secretion in pancreatic beta cells in response to glucose; the function seems to imply transcriptional repression of UCP2. Proposed to deacetylate IRS2 thereby facilitating its insulin-induced tyrosine phosphorylation. Deacetylates SREBF1 isoform SREBP-1C thereby decreasing its stability and transactivation in lipogenic gene expression. Involved in DNA damage response by repressing genes which are involved in DNA repair, such as XPC and TP73, deacetylating XRCC6/Ku70, and facilitating recruitment of additional factors to sites of damaged DNA, such as SIRT1-deacetylated NBN can recruit ATM to initiate DNA repair and SIRT1-deacetylated XPA interacts with RPA2. Also involved in DNA repair of DNA double-strand breaks by homologous recombination and specifically single-strand annealing independently of XRCC6/Ku70 and NBN. Promotes DNA double-strand breaks by mediating deacetylation of SIRT6. Transcriptional suppression of XPC probably involves an E2F4:RBL2 suppressor complex and protein kinase B (AKT) signaling. Transcriptional suppression of TP73 probably involves E2F4 and PCAF. Deacetylates WRN thereby regulating its helicase and exonuclease activities and regulates WRN nuclear translocation in response to DNA damage. Deacetylates APEX1 at 'Lys-6' and 'Lys-7' and stimulates cellular AP endonuclease activity by promoting the association of APEX1 to XRCC1. Catalyzes deacetylation of ERCC4/XPF, thereby impairing interaction with ERCC1 and nucleotide excision repair (NER). Increases p53/TP53-mediated transcription-independent apoptosis by blocking nuclear translocation of cytoplasmic p53/TP53 and probably redirecting it to mitochondria. Deacetylates XRCC6/Ku70 at 'Lys-539' and 'Lys-542' causing it to sequester BAX away from mitochondria thereby inhibiting stress-induced apoptosis. Is involved in autophagy, presumably by deacetylating ATG5, ATG7 and MAP1LC3B/ATG8. Deacetylates AKT1 which leads to enhanced binding of AKT1 and PDK1 to PIP3 and promotes their activation. Proposed to play role in regulation of STK11/LBK1-dependent AMPK signaling pathways implicated in cellular senescence which seems to involve the regulation of the acetylation status of STK11/LBK1. Can deacetylate STK11/LBK1 and thereby increase its activity, cytoplasmic localization and association with STRAD; however, the relevance of such activity in normal cells is unclear. In endothelial cells is shown to inhibit STK11/LBK1 activity and to promote its degradation. Deacetylates SMAD7 at 'Lys-64' and 'Lys-70' thereby promoting its degradation. Deacetylates CIITA and augments its MHC class II transactivation and contributes to its stability. Deacetylates MECOM/EVI1. Deacetylates PML at 'Lys-487' and this deacetylation promotes PML control of PER2 nuclear localization. During the neurogenic transition, represses selective NOTCH1-target genes through histone deacetylation in a BCL6-dependent manner and leading to neuronal differentiation. Regulates the circadian expression of several core clock genes, including BMAL1, RORC, PER2 and CRY1 and plays a critical role in maintaining a controlled rhythmicity in histone acetylation, thereby contributing to circadian chromatin remodeling. Deacetylates BMAL1 and histones at the circadian gene promoters in order to facilitate repression by inhibitory components of the circadian oscillator. Deacetylates PER2, facilitating its ubiquitination and degradation by the proteasome. Protects cardiomyocytes against palmitate-induced apoptosis. Deacetylates XBP1 isoform 2; deacetylation decreases protein stability of XBP1 isoform 2 and inhibits its transcriptional activity. Deacetylates PCK1 and directs its activity toward phosphoenolpyruvate production promoting gluconeogenesis. Involved in the CCAR2-mediated regulation of PCK1 and NR1D1. Deacetylates CTNB1 at 'Lys-49'. In POMC (pro-opiomelanocortin) neurons, required for leptin-induced activation of PI3K signaling. Deacetylates SOX9; promoting SOX9 nuclear localization and transactivation activity. Involved in the regulation of centrosome duplication: deacetylates CENATAC in G1 phase, allowing for SASS6 accumulation on the centrosome and subsequent procentriole assembly. Deacetylates NDC80/HEC1. In addition to protein deacetylase activity, also acts as a protein-lysine deacylase by mediating protein delactylation, depropionylation and decrotonylation. Mediates depropionylation of Osterix (SP7). Catalyzes decrotonylation of histones; it however does not represent a major histone decrotonylase. Mediates protein delactylation of TEAD1 and YAP1. Deacetylates 'Lys-382' of p53/TP53, however with lower activity than isoform 1. In combination, the two isoforms exert an additive effect. Isoform 2 regulates p53/TP53 expression and cellular stress response and is in turn repressed by p53/TP53 presenting a SIRT1 isoform-dependent auto-regulatory loop. Its function is as follows. Catalytically inactive 75SirT1 may be involved in regulation of apoptosis. May be involved in protecting chondrocytes from apoptotic death by associating with cytochrome C and interfering with apoptosome assembly. In terms of biological role, (Microbial infection) In case of HIV-1 infection, interacts with and deacetylates the viral Tat protein. The viral Tat protein inhibits SIRT1 deacetylation activity toward RELA/NF-kappa-B p65, thereby potentiates its transcriptional activity and SIRT1 is proposed to contribute to T-cell hyperactivation during infection. The sequence is that of NAD-dependent protein deacetylase sirtuin-1 from Homo sapiens (Human).